The primary structure comprises 286 residues: MNLRDKLDVYLRLARMDRPIGTLLLLWPCLMALLLAAGGMPDLKVLTIFIFGVVVMRACGCIINDYADRDLDAHVDRTKSRPLASGEVTGREALILFAVMGLFAFGLVLMLNPLVVKLSVVGIILTIIYPFTKRFTNMPQMFLGVVWSWSIPMAYAAQTGEVPAEAWWLFAANWCWTVAYDTMYAMVDREDDLKVGIKSTAILFGKYDRQIIGLFQLAALACFITAGWAADRGLVYGLGIITFVGFSMYQQKLIHERERAPCFKAFLNNNWAGLSLFIALGVDYLI.

Helical transmembrane passes span 20 to 40 (IGTL…AGGM), 43 to 63 (LKVL…GCII), 95 to 115 (ILFA…NPLV), 142 to 162 (FLGV…TGEV), 167 to 187 (WWLF…YAMV), 210 to 230 (QIIG…GWAA), and 234 to 254 (LVYG…QKLI).

The protein belongs to the UbiA prenyltransferase family. Mg(2+) serves as cofactor.

It localises to the cell inner membrane. The catalysed reaction is all-trans-octaprenyl diphosphate + 4-hydroxybenzoate = 4-hydroxy-3-(all-trans-octaprenyl)benzoate + diphosphate. Its pathway is cofactor biosynthesis; ubiquinone biosynthesis. Functionally, catalyzes the prenylation of para-hydroxybenzoate (PHB) with an all-trans polyprenyl group. Mediates the second step in the final reaction sequence of ubiquinone-8 (UQ-8) biosynthesis, which is the condensation of the polyisoprenoid side chain with PHB, generating the first membrane-bound Q intermediate 3-octaprenyl-4-hydroxybenzoate. This Shewanella sediminis (strain HAW-EB3) protein is 4-hydroxybenzoate octaprenyltransferase.